The chain runs to 144 residues: Ribosomal RNA large subunit methyltransferase H (144 aa).

S-adenosyl-L-methionine-binding positions include L63, G92, and 111–116 (LSAMTL).

This sequence belongs to the RNA methyltransferase RlmH family. Homodimer.

The protein localises to the cytoplasm. It carries out the reaction pseudouridine(1915) in 23S rRNA + S-adenosyl-L-methionine = N(3)-methylpseudouridine(1915) in 23S rRNA + S-adenosyl-L-homocysteine + H(+). Its function is as follows. Specifically methylates the pseudouridine at position 1915 (m3Psi1915) in 23S rRNA. The polypeptide is Ribosomal RNA large subunit methyltransferase H (Prochlorococcus marinus (strain MIT 9313)).